A 443-amino-acid chain; its full sequence is COP9 signalosome complex subunit 2 (443 aa).

Residues 254 to 416 form the PCI domain; that stretch reads AHTDFFEAFK…QLLELDHQKR (163 aa).

It belongs to the CSN2 family. Component of the CSN complex, probably composed of cops1, cops2, cops3, cops4, cops5, cops6, cops7, cops8 and cops9.

The protein localises to the cytoplasm. It is found in the nucleus. Its function is as follows. Essential component of the COP9 signalosome complex (CSN), a complex involved in various cellular and developmental processes. The CSN complex is an essential regulator of the ubiquitin (Ubl) conjugation pathway by mediating the deneddylation of the cullin subunits of E3 ligase complexes, leading to modify the Ubl ligase activity. This Danio rerio (Zebrafish) protein is COP9 signalosome complex subunit 2 (cops2).